The following is a 162-amino-acid chain: Cyclic pyranopterin monophosphate synthase (162 aa).

Residues 75–77 (LCH) and 113–114 (ME) contribute to the substrate site. Aspartate 128 is a catalytic residue.

It belongs to the MoaC family. In terms of assembly, homohexamer; trimer of dimers.

It catalyses the reaction (8S)-3',8-cyclo-7,8-dihydroguanosine 5'-triphosphate = cyclic pyranopterin phosphate + diphosphate. It functions in the pathway cofactor biosynthesis; molybdopterin biosynthesis. Functionally, catalyzes the conversion of (8S)-3',8-cyclo-7,8-dihydroguanosine 5'-triphosphate to cyclic pyranopterin monophosphate (cPMP). In Burkholderia cenocepacia (strain HI2424), this protein is Cyclic pyranopterin monophosphate synthase.